The sequence spans 126 residues: B3 domain-containing protein At5g54067 (126 aa).

Positions 20 to 118 (SDIVGNVVLP…KFVVLNFQYS (99 aa)) form a DNA-binding region, TF-B3.

Its subcellular location is the nucleus. This is B3 domain-containing protein At5g54067 from Arabidopsis thaliana (Mouse-ear cress).